The chain runs to 470 residues: MSATKPTTLYDKIWNDHLAHEAEDGTCLLYIDRHLVHEVTSPQAFEGLRTAGRKVHAPEKTLAVVDHNVPTTDRSKPNPDPESAEQIAALAENAREFGVTYYNEFDKRQGVVHVIGPEQGFTLPGTTIVCGDSHTSTHGAFGALAHGIGTSEVEHVLATQTLIQKKAKNMRVTVDGDLPAGVTAKDIILAIIGEIGTAGGTGYVLEYAGSAIRALSMEGRMTVCNMSIEGGARAGLIAPDEKAYAYLKGRPLAPKGEAWDAAMRYWQTLRSDEGAHFDHEIRLDAAALPPIVTWGTSPEDVISITGKVPNPADIADEAKRLSKERALAYMGLNPGTKITDIKIDRMFIGSCTNGRIEDLRAAAKVAEGKTVNANVNAIIVPGSGLVKEQAEAEGLDKIFIAAGFEWREPGCSMCLAMNPDKLAPDERCASTSNRNFEGRQGFKGRTHLVSPAMAAAAAIAGHFVDIREWR.

Positions 351, 411, and 414 each coordinate [4Fe-4S] cluster.

The protein belongs to the aconitase/IPM isomerase family. LeuC type 1 subfamily. As to quaternary structure, heterodimer of LeuC and LeuD. [4Fe-4S] cluster serves as cofactor.

It carries out the reaction (2R,3S)-3-isopropylmalate = (2S)-2-isopropylmalate. It functions in the pathway amino-acid biosynthesis; L-leucine biosynthesis; L-leucine from 3-methyl-2-oxobutanoate: step 2/4. Functionally, catalyzes the isomerization between 2-isopropylmalate and 3-isopropylmalate, via the formation of 2-isopropylmaleate. This chain is 3-isopropylmalate dehydratase large subunit, found in Rhodopseudomonas palustris (strain BisA53).